The sequence spans 271 residues: Phosphonoacetaldehyde hydrolase (271 aa).

The active-site Nucleophile is the aspartate 12. Mg(2+) is bound by residues aspartate 12 and alanine 14. Lysine 54 serves as the catalytic Schiff-base intermediate with substrate. Aspartate 188 is a Mg(2+) binding site.

This sequence belongs to the HAD-like hydrolase superfamily. PhnX family. As to quaternary structure, homodimer. Mg(2+) is required as a cofactor.

The enzyme catalyses phosphonoacetaldehyde + H2O = acetaldehyde + phosphate + H(+). In terms of biological role, involved in phosphonate degradation. The sequence is that of Phosphonoacetaldehyde hydrolase from Vibrio vulnificus (strain CMCP6).